The following is a 175-amino-acid chain: ATP synthase subunit delta (175 aa).

It belongs to the ATPase delta chain family. As to quaternary structure, F-type ATPases have 2 components, F(1) - the catalytic core - and F(0) - the membrane proton channel. F(1) has five subunits: alpha(3), beta(3), gamma(1), delta(1), epsilon(1). F(0) has three main subunits: a(1), b(2) and c(10-14). The alpha and beta chains form an alternating ring which encloses part of the gamma chain. F(1) is attached to F(0) by a central stalk formed by the gamma and epsilon chains, while a peripheral stalk is formed by the delta and b chains.

The protein localises to the cell membrane. Functionally, f(1)F(0) ATP synthase produces ATP from ADP in the presence of a proton or sodium gradient. F-type ATPases consist of two structural domains, F(1) containing the extramembraneous catalytic core and F(0) containing the membrane proton channel, linked together by a central stalk and a peripheral stalk. During catalysis, ATP synthesis in the catalytic domain of F(1) is coupled via a rotary mechanism of the central stalk subunits to proton translocation. In terms of biological role, this protein is part of the stalk that links CF(0) to CF(1). It either transmits conformational changes from CF(0) to CF(1) or is implicated in proton conduction. This chain is ATP synthase subunit delta, found in Ruminiclostridium cellulolyticum (strain ATCC 35319 / DSM 5812 / JCM 6584 / H10) (Clostridium cellulolyticum).